The following is a 527-amino-acid chain: Acyl-coenzyme A thioesterase 4, mitochondrial (527 aa).

A mitochondrion-targeting transit peptide spans 1 to 75; sequence MMTPIGIRIR…FLFDPPPIRF (75 aa). HotDog ACOT-type domains are found at residues 172–294 and 370–487; these read ILYN…RDSK and KDTC…GPEA.

The protein belongs to the acyl coenzyme A hydrolase family. Mostly expressed at low levels in glandular trichomes (lupulin glands), and, to a lower extent, in stems, leaves, flowers and cones.

It localises to the mitochondrion. It carries out the reaction 2-methylpropanoyl-CoA + H2O = 2-methylpropanoate + CoA + H(+). It catalyses the reaction propanoyl-CoA + H2O = propanoate + CoA + H(+). The catalysed reaction is octanoyl-CoA + H2O = octanoate + CoA + H(+). The enzyme catalyses butanoyl-CoA + H2O = butanoate + CoA + H(+). It carries out the reaction 3-methylbutanoyl-CoA + H2O = 3-methylbutanoate + CoA + H(+). It catalyses the reaction 2-methylbutanoyl-CoA + H2O = 2-methylbutanoate + CoA + H(+). Acyl-CoA thioesterases are a group of enzymes that catalyze the hydrolysis of acyl-CoAs to the free fatty acid and coenzyme A (CoASH), providing the potential to regulate intracellular levels of acyl-CoAs, free fatty acids and CoASH. Active on acyl CoAs with short chains (propanoyl-CoA and butanoyl-CoA), branched short chains (2-methylpropanoyl-CoA, 2-methylbutanoyl-CoA and 3-methylbutanoyl-CoA) and medium chains (octanoyl-CoA). The polypeptide is Acyl-coenzyme A thioesterase 4, mitochondrial (Humulus lupulus (European hop)).